The following is a 387-amino-acid chain: Patatin group A-3 (387 aa).

A signal peptide spans 1–23; that stretch reads MATTKSFLILIVMILATTSSTFA. In terms of domain architecture, PNPLA spans 32-230; that stretch reads LSIDGGGVKG…TVADPALLSV (199 aa). The short motif at 36–41 is the GXGXXG element; that stretch reads GGGVKG. The short motif at 75–79 is the GXSXG element; it reads GTSTG. Ser-77 acts as the Nucleophile in catalysis. A glycan (N-linked (GlcNAc...) asparagine) is linked at Asn-115. The Proton acceptor role is filled by Asp-216. Positions 216-218 match the DGA/G motif; sequence DGA. Positions 361-385 form a coiled coil; that stretch reads ETYEEALKRFAKLLSDRKKLRANKA.

This sequence belongs to the patatin family. Tuber and stolon.

It is found in the vacuole. In terms of biological role, probable lipolytic acyl hydrolase (LAH), an activity which is thought to be involved in the response of tubers to pathogens. This chain is Patatin group A-3, found in Solanum tuberosum (Potato).